A 123-amino-acid chain; its full sequence is Integration host factor subunit alpha (123 aa).

It belongs to the bacterial histone-like protein family. In terms of assembly, heterodimer of an alpha and a beta chain.

Its function is as follows. This protein is one of the two subunits of integration host factor, a specific DNA-binding protein that functions in genetic recombination as well as in transcriptional and translational control. The chain is Integration host factor subunit alpha from Polaromonas naphthalenivorans (strain CJ2).